Reading from the N-terminus, the 569-residue chain is Synaptotagmin-4 (569 aa).

A helical membrane pass occupies residues 1–21 (MGFLFGLFIGIAVSFGLVVAF). The region spanning 67-251 (QRQKLNWLNL…WPVRKIIPIL (185 aa)) is the SMP-LTD domain. The segment at 229–531 (EETIRDAIED…KIGRVIMTLT (303 aa)) is phospholipid binding. C2 domains follow at residues 245–366 (RKII…DIWL) and 426–543 (TDMK…QEWF). Residues aspartate 459, aspartate 465, aspartate 514, aspartate 516, and aspartate 521 each contribute to the Ca(2+) site.

Belongs to the synaptotagmin family. It depends on Ca(2+) as a cofactor.

The protein resides in the membrane. Functionally, may be involved in membrane trafficking. This chain is Synaptotagmin-4 (SYT4), found in Arabidopsis thaliana (Mouse-ear cress).